Consider the following 376-residue polypeptide: DNA replication and repair protein RecF (376 aa).

30 to 37 (GNNAQGKS) lines the ATP pocket.

The protein belongs to the RecF family.

Its subcellular location is the cytoplasm. Functionally, the RecF protein is involved in DNA metabolism; it is required for DNA replication and normal SOS inducibility. RecF binds preferentially to single-stranded, linear DNA. It also seems to bind ATP. The protein is DNA replication and repair protein RecF of Nostoc sp. (strain PCC 7120 / SAG 25.82 / UTEX 2576).